Here is a 306-residue protein sequence, read N- to C-terminus: Pantothenate kinase (306 aa).

91–98 (GSVAVGKS) lines the ATP pocket.

It belongs to the prokaryotic pantothenate kinase family.

It is found in the cytoplasm. It carries out the reaction (R)-pantothenate + ATP = (R)-4'-phosphopantothenate + ADP + H(+). Its pathway is cofactor biosynthesis; coenzyme A biosynthesis; CoA from (R)-pantothenate: step 1/5. In Streptococcus pyogenes serotype M1, this protein is Pantothenate kinase (coaA).